Consider the following 674-residue polypeptide: MDVQAQRPPLLEVKRNVELKAALVKSSSRVPLSASRLKRGPDQMEDALEPAKKRTRVMGAVTKVDTSRPRGPLLSTVSQTQGHTAAQKGPKKTGPRGCSAIGTVLRSQKPVPAAPAQKPGTSTAPVVVGKRAGKRPAWDLKGQLCDLNEELKRYREKTQTLELENRGLREQLREVQEQATTLGTERNTLEGELASVRSRAEQDQQRLETLSARVLELEECLGTRERLLQELQGERLQLQEERSTLSTQLEEQERRFQATEAALSSSQEEVVCLRQKTEAQVTLLAEQGDRLYGLEMERRRLHNQLQELKGNIRVFCRVRPVLEGESTPSPGFLVFPPGPAGPSDPPTGLSLSRSDDRRSTLTGAPAPTVRHDFSFDRVFPPGSKQEEVFEEIAMLVQSALDGYPVCIFAYGQTGSGKTFTMEGGPRGDPQLEGLIPRAMRHLFSVAQEMSGQGWTYSFVASYVEIYNETVRDLLATGPRKGQGGECEIRRASPGSEELTVTNARYVPVSCEKEVEALLHLAHQNRAVAHTAQNKRSSRSHSVFQLQISGEHAARGLQCGAPLNLVDLAGSERLDPGLHLGPGERDRLRETQAINSSLSTLGLVIMALSNKESHVPYRNSKLTYLLQNSLGGSAKMLMFVNISPLEENVSESLNSLRFASKVNQCVIGTAQANKK.

Phosphoserine is present on residues S28, S33, and S35. The segment at 66–96 (TSRPRGPLLSTVSQTQGHTAAQKGPKKTGPR) is disordered. Residues 75-84 (STVSQTQGHT) show a composition bias toward polar residues. The stretch at 146 to 315 (DLNEELKRYR…QELKGNIRVF (170 aa)) forms a coiled coil. The Kinesin motor domain maps to 311-664 (NIRVFCRVRP…LRFASKVNQC (354 aa)). Residues 327–366 (TPSPGFLVFPPGPAGPSDPPTGLSLSRSDDRRSTLTGAPA) are disordered. Residues 336 to 345 (PPGPAGPSDP) show a composition bias toward pro residues. T360 carries the post-translational modification Phosphothreonine. 411-418 (GQTGSGKT) contributes to the ATP binding site.

This sequence belongs to the TRAFAC class myosin-kinesin ATPase superfamily. Kinesin family. NCD subfamily. Binds NUBP1 and NUBP2. Interacts with PPP1R42. In terms of tissue distribution, highly expressed in 14 dpc embryos, spleen and NIH3T3 cells. Also expressed in testis, brain, lung, kidney and cultured astrocytes. Very low levels in skeletal muscle and heart.

The protein resides in the nucleus. It is found in the cytoplasm. It localises to the cytoskeleton. Its subcellular location is the microtubule organizing center. The protein localises to the centrosome. The protein resides in the spindle. It is found in the early endosome. Minus end-directed microtubule-dependent motor required for bipolar spindle formation. May contribute to movement of early endocytic vesicles. Regulates cilium formation and structure. This chain is Kinesin-like protein KIFC1, found in Mus musculus (Mouse).